Reading from the N-terminus, the 361-residue chain is Mitochondrial import receptor subunit TOM40 homolog (361 aa).

Residues 1–73 form a disordered region; sequence MGNVLAASSP…GAAAASEDGS (73 aa). Pro residues predominate over residues 11-36; that stretch reads PAGPPPPPTPSLVGLPPPPPSPPGFT. Residues 40–50 are compositionally biased toward gly residues; that stretch reads LGGGLGTGSST. Over residues 51-69 the composition is skewed to low complexity; it reads GRGSERTPGAAASGAAAAS.

It belongs to the Tom40 family. Forms part of the preprotein translocase complex of the outer mitochondrial membrane (TOM complex) which consists of at least 7 different proteins (TOMM5, TOMM6, TOMM7, TOMM20, TOMM22, TOMM40 and TOMM70). Interacts with mitochondrial targeting sequences. Interacts with TIMM29; linking the TIM22 complex to the TOM complex. Forms a complex with BCAP31 (via C-terminus) which mediates the translocation of components of the mitochondrial membrane respiratory chain NADH dehydrogenase (Complex I) from the cytosol to the mitochondria. Interacts (via N-terminus) with CYP1A1 (via mitochondrial targeting signal); this interaction is required for CYP1A1 translocation across the mitochondrial outer membrane.

The protein resides in the mitochondrion outer membrane. Functionally, channel-forming protein essential for import of protein precursors into mitochondria. Plays a role in the assembly of the mitochondrial membrane respiratory chain NADH dehydrogenase (Complex I) by forming a complex with BCAP31 and mediating the translocation of Complex I components from the cytosol to the mitochondria. The sequence is that of Mitochondrial import receptor subunit TOM40 homolog (Tomm40) from Mus musculus (Mouse).